The following is a 183-amino-acid chain: Ribosome-recycling factor (183 aa).

This sequence belongs to the RRF family.

Its subcellular location is the cytoplasm. Functionally, responsible for the release of ribosomes from messenger RNA at the termination of protein biosynthesis. May increase the efficiency of translation by recycling ribosomes from one round of translation to another. This Bifidobacterium longum subsp. infantis (strain ATCC 15697 / DSM 20088 / JCM 1222 / NCTC 11817 / S12) protein is Ribosome-recycling factor.